Here is a 229-residue protein sequence, read N- to C-terminus: uncharacterized protein (229 aa).

The next 7 membrane-spanning stretches (helical) occupy residues 21–41, 56–76, 83–103, 109–129, 141–161, 162–182, and 202–222; these read IYSL…LMLY, MIYY…SGAA, ALPI…FIIV, TVFQ…IIGV, AMFA…FIGS, GMMS…LIAS, and WAVA…ISLL.

Belongs to the BI1 family.

It localises to the cell membrane. This is an uncharacterized protein from Streptococcus pyogenes serotype M3 (strain ATCC BAA-595 / MGAS315).